The primary structure comprises 453 residues: Exodeoxyribonuclease 7 large subunit (453 aa).

The protein belongs to the XseA family. In terms of assembly, heterooligomer composed of large and small subunits.

The protein localises to the cytoplasm. It catalyses the reaction Exonucleolytic cleavage in either 5'- to 3'- or 3'- to 5'-direction to yield nucleoside 5'-phosphates.. Its function is as follows. Bidirectionally degrades single-stranded DNA into large acid-insoluble oligonucleotides, which are then degraded further into small acid-soluble oligonucleotides. The protein is Exodeoxyribonuclease 7 large subunit of Geobacter metallireducens (strain ATCC 53774 / DSM 7210 / GS-15).